We begin with the raw amino-acid sequence, 285 residues long: Dihydropteroate synthase (285 aa).

Positions 18 to 276 constitute a Pterin-binding domain; the sequence is PKIMGIVNLT…DVKATADALK (259 aa). N25 provides a ligand contact to Mg(2+). (7,8-dihydropterin-6-yl)methyl diphosphate is bound by residues T66, D99, N119, D190, K229, and 264–266; that span reads RVH.

The protein belongs to the DHPS family. In terms of assembly, homodimer. Mg(2+) serves as cofactor.

The enzyme catalyses (7,8-dihydropterin-6-yl)methyl diphosphate + 4-aminobenzoate = 7,8-dihydropteroate + diphosphate. It functions in the pathway cofactor biosynthesis; tetrahydrofolate biosynthesis; 7,8-dihydrofolate from 2-amino-4-hydroxy-6-hydroxymethyl-7,8-dihydropteridine diphosphate and 4-aminobenzoate: step 1/2. Its function is as follows. Catalyzes the condensation of para-aminobenzoate (pABA) with 6-hydroxymethyl-7,8-dihydropterin diphosphate (DHPt-PP) to form 7,8-dihydropteroate (H2Pte), the immediate precursor of folate derivatives. In Neisseria meningitidis serogroup B (strain ATCC BAA-335 / MC58), this protein is Dihydropteroate synthase (folP).